The following is a 325-amino-acid chain: tRNA N6-adenosine threonylcarbamoyltransferase (325 aa).

Fe cation is bound by residues His107, His111, and Tyr127. Substrate is bound by residues 127–131 (YVSGG), Asp159, Gly172, Glu176, and Asn257. Asp285 provides a ligand contact to Fe cation.

Belongs to the KAE1 / TsaD family. In terms of assembly, monomer. Component of the KEOPS complex that consists of Kae1, Bud32, Cgi121 and Pcc1; the whole complex dimerizes. Fe(2+) is required as a cofactor.

It is found in the cytoplasm. It carries out the reaction L-threonylcarbamoyladenylate + adenosine(37) in tRNA = N(6)-L-threonylcarbamoyladenosine(37) in tRNA + AMP + H(+). In terms of biological role, required for the formation of a threonylcarbamoyl group on adenosine at position 37 (t(6)A37) in tRNAs that read codons beginning with adenine. Is a component of the KEOPS complex that is probably involved in the transfer of the threonylcarbamoyl moiety of threonylcarbamoyl-AMP (TC-AMP) to the N6 group of A37. Kae1 likely plays a direct catalytic role in this reaction, but requires other protein(s) of the complex to fulfill this activity. The protein is tRNA N6-adenosine threonylcarbamoyltransferase of Thermococcus gammatolerans (strain DSM 15229 / JCM 11827 / EJ3).